Reading from the N-terminus, the 279-residue chain is Protein K1 (279 aa).

The signal sequence occupies residues 1–18 (MFLYVVCSLAVCFRGLLS). Topologically, residues 19–220 (LSLQSSPNLC…TYLYIQEHLL (202 aa)) are extracellular. The chain crosses the membrane as a helical span at residues 221–241 (VFMTLVALIGTMCGILGTIIF). Topologically, residues 242 to 279 (AHCQKQRDSNKTVPQQLQDYYSLHDLCTEDYTQPVDWY) are cytoplasmic.

As to quaternary structure, homooligomer.

It is found in the host membrane. In terms of biological role, promotes host cell survival pathways and may contribute to pathogenesis by preventing infected cells from undergoing apoptosis. Acts in host B-cells by mimicking the activated B-cell receptor complex. The cytoplasmic tail of K1 can induce the phosphorylation of a number of different kinases, leading to the activation of survival signaling pathways. In Human herpesvirus 8 type P (isolate GK18) (HHV-8), this protein is Protein K1 (K1).